Reading from the N-terminus, the 214-residue chain is Ribonuclease HII (214 aa).

In terms of domain architecture, RNase H type-2 spans 26–214 (EIVCGVDEAG…PVREAFDLIR (189 aa)). Residues D32, E33, and D124 each coordinate a divalent metal cation.

This sequence belongs to the RNase HII family. Requires Mn(2+) as cofactor. The cofactor is Mg(2+).

Its subcellular location is the cytoplasm. The catalysed reaction is Endonucleolytic cleavage to 5'-phosphomonoester.. Endonuclease that specifically degrades the RNA of RNA-DNA hybrids. The sequence is that of Ribonuclease HII from Burkholderia pseudomallei (strain 668).